A 994-amino-acid chain; its full sequence is Chromatin modification-related protein vid21 (994 aa).

Disordered regions lie at residues 122–275 (PDNL…APPV) and 288–308 (PKVD…ENDV). 5 stretches are compositionally biased toward basic and acidic residues: residues 158–171 (TIHK…KETI), 178–191 (KEVE…EEKG), 204–233 (LTEE…KEHE), 254–265 (VESKEVKKKEVS), and 288–305 (PKVD…KVTE). 2 positions are modified to phosphoserine: serine 298 and serine 378. An HSA domain is found at 475–548 (PKRQNEMPRL…SKNKKPYMQE (74 aa)). Residues 671-693 (SFMEKKARSDENQLDGNKIKDDN) form a disordered region. Over residues 672–693 (FMEKKARSDENQLDGNKIKDDN) the composition is skewed to basic and acidic residues. The region spanning 713–773 (KDIRPEAPWL…DCFERWIQVD (61 aa)) is the Myb-like domain. Disordered regions lie at residues 857-880 (TMTK…PSPL) and 975-994 (EQIH…ERTQ). Positions 880-912 (LELSRLKSEREAQIQQIQAQRNFAQLQSQNRAL) form a coiled coil.

This sequence belongs to the EAF1 family. In terms of assembly, component of the NuA4 histone acetyltransferase complex.

Its subcellular location is the nucleus. In terms of biological role, component of the NuA4 histone acetyltransferase complex which is involved in transcriptional activation of selected genes principally by acetylation of nucleosomal histone H4 and H2A. The NuA4 complex is also involved in DNA repair. This chain is Chromatin modification-related protein vid21 (vid21), found in Schizosaccharomyces pombe (strain 972 / ATCC 24843) (Fission yeast).